A 378-amino-acid polypeptide reads, in one-letter code: Probable pectin lyase C (378 aa).

Positions 1–18 (MKVPFLQLLCLNAALASA) are cleaved as a signal peptide. 2 disulfides stabilise this stretch: C81-C100 and C90-C220. N123 carries an N-linked (GlcNAc...) asparagine glycan. R250 is an active-site residue. C316 and C324 form a disulfide bridge.

Belongs to the polysaccharide lyase 1 family.

The protein localises to the secreted. The catalysed reaction is Eliminative cleavage of (1-&gt;4)-alpha-D-galacturonan methyl ester to give oligosaccharides with 4-deoxy-6-O-methyl-alpha-D-galact-4-enuronosyl groups at their non-reducing ends.. Its function is as follows. Pectinolytic enzymes consist of four classes of enzymes: pectin lyase, polygalacturonase, pectin methylesterase and rhamnogalacturonase. Among pectinolytic enzymes, pectin lyase is the most important in depolymerization of pectin, since it cleaves internal glycosidic bonds of highly methylated pectins. The polypeptide is Probable pectin lyase C (pelC) (Aspergillus niger).